The following is a 189-amino-acid chain: Probable RNA 2'-phosphotransferase (189 aa).

The protein belongs to the KptA/TPT1 family.

Removes the 2'-phosphate from RNA via an intermediate in which the phosphate is ADP-ribosylated by NAD followed by a presumed transesterification to release the RNA and generate ADP-ribose 1''-2''-cyclic phosphate (APPR&gt;P). May function as an ADP-ribosylase. The protein is Probable RNA 2'-phosphotransferase of Streptomyces griseus subsp. griseus (strain JCM 4626 / CBS 651.72 / NBRC 13350 / KCC S-0626 / ISP 5235).